The chain runs to 125 residues: Alpha-endosulfine (125 aa).

Positions 1–37 (MSDKYIGDSHLEETGEEKQDSQEKEAVTPEKAEEQKL) are enriched in basic and acidic residues. Residues 1 to 52 (MSDKYIGDSHLEETGEEKQDSQEKEAVTPEKAEEQKLKAKYPNLGQKPGGSD) form a disordered region. Thr28 is modified (phosphothreonine; by CDK2). Phosphoserine; by GWL is present on Ser67. The disordered stretch occupies residues 86–107 (GPDKNLVTGDHIPTPQDLPQRK). Thr99 is subject to Phosphothreonine; by CDK2. Residue Ser109 is modified to Phosphoserine; by PKA.

Belongs to the endosulfine family. As to quaternary structure, interacts (when phosphorylated at Ser-67) with ppp2r2d. In terms of processing, phosphorylation at Ser-67 by gwl during mitosis is essential for interaction with PPP2R2D (PR55-delta) and subsequent inactivation of PP2A. Phosphorylated by PKA.

It is found in the cytoplasm. In terms of biological role, protein phosphatase inhibitor that specifically inhibits protein phosphatase 2A (PP2A) during mitosis. When phosphorylated at Ser-67 during mitosis, specifically interacts with ppp2r2d (PR55-delta) and inhibits its activity, leading to inactivation of PP2A, an essential condition to keep cyclin-B1-CDK1 activity high during M phase. The chain is Alpha-endosulfine (ensa) from Xenopus laevis (African clawed frog).